Consider the following 449-residue polypeptide: Glutamate--tRNA ligase 2 (449 aa).

Residues Pro-17–Asn-27 carry the 'HIGH' region motif. A 'KMSKS' region motif is present at residues Ala-248–Arg-252. Lys-251 is a binding site for ATP.

The protein belongs to the class-I aminoacyl-tRNA synthetase family. Glutamate--tRNA ligase type 1 subfamily. As to quaternary structure, monomer.

The protein localises to the cytoplasm. It carries out the reaction tRNA(Glu) + L-glutamate + ATP = L-glutamyl-tRNA(Glu) + AMP + diphosphate. In terms of biological role, catalyzes the attachment of glutamate to tRNA(Glu) in a two-step reaction: glutamate is first activated by ATP to form Glu-AMP and then transferred to the acceptor end of tRNA(Glu). The sequence is that of Glutamate--tRNA ligase 2 from Jannaschia sp. (strain CCS1).